The primary structure comprises 759 residues: Serine/threonine-protein kinase HRK1 (759 aa).

The segment at 1–32 (MPNLLSRNPFHGHHNDHHHDRENSSNNPPQLI) is disordered. The residue at position 37 (S37) is a Phosphoserine. Positions 45–162 (KQSNDSLRSE…PPPSKSTSTV (118 aa)) are disordered. The span at 59 to 97 (SMKSTTTTTNYTTTNLNNNTHSHSNATSISTNNYNNNYE) shows a compositional bias: low complexity. Positions 113–122 (SPASPKQTHS) are enriched in polar residues. Residues 215–722 (GKLGKLLGSG…LDDIFNDEWF (508 aa)) form the Protein kinase domain. ATP-binding positions include 221 to 229 (LGSGAGGSV) and K244. Catalysis depends on D340, which acts as the Proton acceptor. S382 and S472 each carry phosphoserine. Polar residues predominate over residues 493–502 (PNTPASIQGK). Disordered stretches follow at residues 493 to 578 (PNTP…GRVD) and 614 to 682 (AANA…KIIH). Phosphothreonine is present on T495. S498 carries the phosphoserine modification. Over residues 510-519 (VEEETEENKE) the composition is skewed to acidic residues. Residues 520-547 (DDSNNDKESTPDNDKESTIDIKISKNEN) are compositionally biased toward basic and acidic residues. Residues 614 to 646 (AANANPDMVPQNNPQQQQQQQQQQQQQQQQQQQ) show a composition bias toward low complexity. Residues 663–672 (ASDNKSSQQH) show a composition bias toward polar residues.

The protein belongs to the protein kinase superfamily. Ser/Thr protein kinase family.

It is found in the cytoplasm. The catalysed reaction is L-seryl-[protein] + ATP = O-phospho-L-seryl-[protein] + ADP + H(+). The enzyme catalyses L-threonyl-[protein] + ATP = O-phospho-L-threonyl-[protein] + ADP + H(+). In terms of biological role, involved in regulating the activity of the plasma membrane proton pump PMA1. This is Serine/threonine-protein kinase HRK1 (HRK1) from Saccharomyces cerevisiae (strain ATCC 204508 / S288c) (Baker's yeast).